The primary structure comprises 34 residues: Turripeptide Pal9a (34 aa).

3 cysteine pairs are disulfide-bonded: cysteine 3–cysteine 17, cysteine 8–cysteine 19, and cysteine 13–cysteine 30. Glutamine 34 is modified (glutamine amide).

Expressed by the venom duct.

The protein resides in the secreted. The chain is Turripeptide Pal9a from Polystira albida (White giant-turris).